Here is a 100-residue protein sequence, read N- to C-terminus: Small ribosomal subunit protein uS14c (100 aa).

Belongs to the universal ribosomal protein uS14 family. Part of the 30S ribosomal subunit.

Its subcellular location is the plastid. It is found in the chloroplast. In terms of biological role, binds 16S rRNA, required for the assembly of 30S particles. This is Small ribosomal subunit protein uS14c from Euglena gracilis.